The chain runs to 1020 residues: Phosphatidylinositol 3-kinase VPS34 (1020 aa).

The region spanning 49 to 210 is the C2 PI3K-type domain; it reads LSTKFEDPTV…NWLDKMVLPK (162 aa). In terms of domain architecture, PIK helical spans 331–577; that stretch reads DKELKPTPQL…DGPIKIYMDI (247 aa). The region spanning 666–1004 is the PI3K/PI4K catalytic domain; it reads YPEESSVFKS…LINDSVNAFL (339 aa). Positions 672–678 are G-loop; the sequence is VFKSSLA. The segment at 873-881 is catalytic loop; sequence GVGDRHLDN. An activation loop region spans residues 892-913; the sequence is HADFGYILGRDPKPFPPLMKLP.

The protein belongs to the PI3/PI4-kinase family. As to quaternary structure, component of the autophagy-specific VPS34 PI3-kinase complex I composed of at least VPS15, VPS30, VPS34, and of the VPS34 PI3-kinase complex II composed of VPS15, VPS30, VPS34 and VPS38. Interacts with VMNA7. Autophosphorylated.

It is found in the golgi apparatus. Its subcellular location is the trans-Golgi network membrane. The protein resides in the endosome membrane. The enzyme catalyses a 1,2-diacyl-sn-glycero-3-phospho-(1D-myo-inositol) + ATP = a 1,2-diacyl-sn-glycero-3-phospho-(1D-myo-inositol-3-phosphate) + ADP + H(+). In terms of biological role, multifunctional phosphatidylinositol 3-kinase involved in acidification of vacuoles, pH-dependent cell growth, and autophagocytosis. Plays an important role in protein transport and virulence. Component of the autophagy-specific VPS34 PI3-kinase complex I essential to recruit the ATG8-phosphatidylinositol conjugate and the ATG12-ATG5 conjugate to the pre-autophagosomal structure. Also involved in endosome-to-Golgi retrograde transport as part of the VPS34 PI3-kinase complex II. This second complex is required for the endosome-to-Golgi retrieval of PEP1 and KEX2, and the recruitment of VPS5 and VPS7, two components of the retromer complex, to endosomal membranes (probably through the synthesis of a specific pool of phosphatidylinositol 3-phosphate recruiting the retromer to the endosomes). Finally, it might also be involved in ethanol tolerance and cell wall integrity. The chain is Phosphatidylinositol 3-kinase VPS34 from Candida albicans (Yeast).